Here is a 464-residue protein sequence, read N- to C-terminus: 26S proteasome regulatory subunit 7 homolog B (464 aa).

246–253 contributes to the ATP binding site; sequence GPPGSGKT. Lys452 participates in a covalent cross-link: Glycyl lysine isopeptide (Lys-Gly) (interchain with G-Cter in ubiquitin).

This sequence belongs to the AAA ATPase family. As to quaternary structure, component of the 19S regulatory particle (RP/PA700) base subcomplex of the 26S proteasome. The 26S proteasome is composed of a core protease (CP), known as the 20S proteasome, capped at one or both ends by the 19S regulatory particle (RP/PA700). The RP/PA700 complex is composed of at least 17 different subunits in two subcomplexes, the base and the lid, which form the portions proximal and distal to the 20S proteolytic core, respectively.

Its subcellular location is the cytoplasm. The protein localises to the nucleus. In terms of biological role, the 26S proteasome is involved in the ATP-dependent degradation of ubiquitinated proteins. The regulatory (or ATPase) complex confers ATP dependency and substrate specificity to the 26S complex. The sequence is that of 26S proteasome regulatory subunit 7 homolog B (RPT1B) from Arabidopsis thaliana (Mouse-ear cress).